The chain runs to 198 residues: MASYKNIFKITHNDVLPIQGSILIAEPFLQDAYFQRSVVLLIEHTEHGSMGFVLNKKTDLIVNSFFKEFAEFPEIPIYLGGPVSPNRLFFIHSLGDNIIPDALKINDYLYFDGDFNALKRYILNGHPIDGKVKFFLGYSGWTEGQLNHEIKRNSWAVSHITTDNILSADGEGYWKDSVELLGNDYKTWTKYPKDPYLN.

Belongs to the UPF0301 (AlgH) family.

This is UPF0301 protein BDI_1431 from Parabacteroides distasonis (strain ATCC 8503 / DSM 20701 / CIP 104284 / JCM 5825 / NCTC 11152).